Consider the following 191-residue polypeptide: Amelogenin, X isoform (191 aa).

A signal peptide spans 1-16; it reads MGTWILFACLLGAAFA. A Phosphoserine modification is found at S32. Over residues 95–117 the composition is skewed to low complexity; the sequence is IPQQPMMPVPGQHSMTPIQHHQP. Residues 95-191 are disordered; that stretch reads IPQQPMMPVP…TDKTKREEVD (97 aa). A compositionally biased stretch (pro residues) spans 118 to 171; that stretch reads NLPPPAQQPYQPQPVQPQPHQPMQPQPPVHPMQPLPPQPPLPPMFPMQPLPPML.

It belongs to the amelogenin family. In terms of assembly, interacts with KRT5. In terms of processing, phosphorylated by FAM20C in vitro.

The protein localises to the secreted. It is found in the extracellular space. The protein resides in the extracellular matrix. In terms of biological role, plays a role in biomineralization. Seems to regulate the formation of crystallites during the secretory stage of tooth enamel development. Thought to play a major role in the structural organization and mineralization of developing enamel. The chain is Amelogenin, X isoform (AMELX) from Homo sapiens (Human).